The sequence spans 458 residues: Retinoic acid receptor alpha-B (458 aa).

The modulating stretch occupies residues Met1–Val79. The segment at His48–Pro75 is disordered. Over residues Trp49–Glu64 the composition is skewed to polar residues. Positions Tyr80 to Asn155 form a DNA-binding region, nuclear receptor. 2 consecutive NR C4-type zinc fingers follow at residues Cys83 to Cys103 and Cys119 to Cys138. The hinge stretch occupies residues Asp156–Pro177. Residues Asp178 to Ser412 form the NR LBD domain. The short motif at Pro403–Asn411 is the 9aaTAD element. The segment at Asn411–Pro458 is disordered. Positions Leu415–Ala435 are enriched in gly residues. Low complexity predominate over residues Pro436–Pro458.

This sequence belongs to the nuclear hormone receptor family. NR1 subfamily. As to quaternary structure, heterodimer; with an rxr molecule. Binds DNA preferentially as a rar/rxr heterodimer. In the embryo, zygotic expression largely overlaps that of raraa, with high levels in hindbrain, lateral plate mesoderm (LPM) and tail bud, but in later stages rarab is expressed more broadly in the brain, pectoral fin bud and pharyngeal arches.

The protein resides in the nucleus. Its function is as follows. Receptor for retinoic acid. Retinoic acid receptors bind as heterodimers to their target response elements in response to their ligands, all-trans or 9-cis retinoic acid, and regulate gene expression in various biological processes. The rar/rxr heterodimers bind to the retinoic acid response elements (RARE) composed of tandem 5'-AGGTCA-3' sites known as DR1-DR5. Required for hindbrain development and, in lateral plate mesoderm, for specification of the pectoral fins. This Danio rerio (Zebrafish) protein is Retinoic acid receptor alpha-B.